The chain runs to 484 residues: Probable D-lactate dehydrogenase, mitochondrial (484 aa).

A mitochondrion-targeting transit peptide spans 1-52 (MAMLLRVATQRLSPWRSFCSRGSQGGLSQDFVEALKAVVGSPHVSTASAVRE). Lys-36 bears the N6-acetyllysine mark. The 181-residue stretch at 62 to 242 (RCQPPDAVVW…TSTTLRLHPA (181 aa)) folds into the FAD-binding PCMH-type domain. Lys-292 is subject to N6-acetyllysine. Lys-335 is modified (N6-acetyllysine; alternate). Residue Lys-335 is modified to N6-succinyllysine; alternate. 2 positions are modified to N6-acetyllysine: Lys-422 and Lys-449.

The protein belongs to the FAD-binding oxidoreductase/transferase type 4 family. Interacts with CSRP3. The cofactor is FAD. Readily detected in liver and kidney, with a weaker signal observed in heart, skeletal muscle, stomach, brain, and lung.

Its subcellular location is the mitochondrion. It catalyses the reaction (R)-lactate + 2 Fe(III)-[cytochrome c] = 2 Fe(II)-[cytochrome c] + pyruvate + 2 H(+). Involved in D-lactate, but not L-lactate catabolic process. The protein is Probable D-lactate dehydrogenase, mitochondrial of Mus musculus (Mouse).